A 471-amino-acid polypeptide reads, in one-letter code: Regulator of microtubule dynamics protein 3 (471 aa).

Over 1-12 (MSRLGALGGSRA) the chain is Mitochondrial intermembrane. A helical transmembrane segment spans residues 13 to 35 (GLGLLLGTAAGLGFLCVLYSQRW). The Cytoplasmic portion of the chain corresponds to 36-471 (KRTQRHGRSQ…LEELEVILGK (436 aa)). Phosphoserine is present on residues serine 44, serine 46, serine 50, and serine 57. Positions 91-125 (LDRLDFVLTSLMALRREVEELQRSLQGLAGEIVGE) form a coiled coil. The FFAT signature appears at 157–163 (VYFTASS). Residue threonine 160 is modified to Phosphothreonine. Residues 168–203 (TDAESEGGYTTANAESDYERDSDKESEDAEDEVSCE) are disordered. Residues serine 183, serine 193, serine 212, and serine 233 each carry the phosphoserine modification. A compositionally biased stretch (acidic residues) spans 191-201 (KESEDAEDEVS).

It belongs to the RMDN family. As to quaternary structure, interacts with PTPN2. Interacts with microtubules. Interacts with VAPB. Interacts (via FFAT motif) with MOSPD2 (via MSP domain). Interacts (via phosphorylated FFAT motif) with MOSPD2, VAPA and VAPB. Phosphorylation at Thr-160 of the FFAT motif activates interaction with MOSPD2, VAPA and VAPB.

The protein localises to the mitochondrion outer membrane. Its subcellular location is the cytoplasm. It is found in the nucleus. It localises to the cytoskeleton. The protein resides in the spindle. The protein localises to the spindle pole. Involved in cellular calcium homeostasis regulation. May participate in differentiation and apoptosis of keratinocytes. Overexpression induces apoptosis. The chain is Regulator of microtubule dynamics protein 3 from Rattus norvegicus (Rat).